Here is a 619-residue protein sequence, read N- to C-terminus: Guanylate cyclase soluble subunit beta-1 (619 aa).

Position 105 (histidine 105) interacts with heme. One can recognise a Guanylate cyclase domain in the interval 421–554 (TILFSGIVGF…NTVNLTSRTE (134 aa)).

Belongs to the adenylyl cyclase class-4/guanylyl cyclase family. The active enzyme is formed by a heterodimer of an alpha and a beta subunit. Heterodimer with GUCY1A1. Can also form inactive homodimers in vitro. Heme serves as cofactor. In terms of tissue distribution, detected in brain cortex and cerebellum (at protein level).

Its subcellular location is the cytoplasm. It catalyses the reaction GTP = 3',5'-cyclic GMP + diphosphate. Activated by nitric oxide in the presence of magnesium or manganese ions. Its function is as follows. Mediates responses to nitric oxide (NO) by catalyzing the biosynthesis of the signaling molecule cGMP. The protein is Guanylate cyclase soluble subunit beta-1 of Homo sapiens (Human).